Consider the following 406-residue polypeptide: S-adenosylmethionine synthase (406 aa).

Position 17 (His17) interacts with ATP. Residue Asp19 participates in Mg(2+) binding. Glu45 contributes to the K(+) binding site. 2 residues coordinate L-methionine: Glu58 and Gln101. The tract at residues 101-111 (QSAEINQGVAR) is flexible loop. Residues 178-180 (DGK), Asp258, 264-265 (RK), Ala281, and Lys285 each bind ATP. Residue Asp258 coordinates L-methionine. Position 289 (Lys289) interacts with L-methionine.

The protein belongs to the AdoMet synthase family. In terms of assembly, homotetramer; dimer of dimers. Mg(2+) serves as cofactor. Requires K(+) as cofactor.

The protein resides in the cytoplasm. The catalysed reaction is L-methionine + ATP + H2O = S-adenosyl-L-methionine + phosphate + diphosphate. It functions in the pathway amino-acid biosynthesis; S-adenosyl-L-methionine biosynthesis; S-adenosyl-L-methionine from L-methionine: step 1/1. Its function is as follows. Catalyzes the formation of S-adenosylmethionine (AdoMet) from methionine and ATP. The overall synthetic reaction is composed of two sequential steps, AdoMet formation and the subsequent tripolyphosphate hydrolysis which occurs prior to release of AdoMet from the enzyme. The protein is S-adenosylmethionine synthase of Bifidobacterium longum subsp. infantis (strain ATCC 15697 / DSM 20088 / JCM 1222 / NCTC 11817 / S12).